A 125-amino-acid chain; its full sequence is DNA-directed RNA polymerase II subunit RPB9 (125 aa).

N-acetylmethionine is present on Met-1. Residues Cys-17, Cys-20, Cys-39, Cys-42, Cys-86, Cys-89, Cys-114, and Cys-119 each contribute to the Zn(2+) site. The segment at 17 to 42 adopts a C4-type zinc-finger fold; it reads CQECNNMLYPKEDKENRILLYACRNC. A TFIIS-type zinc finger spans residues 82–124; sequence EDHPCQKCGHKEAVFFQSHSARAEDAMRLYYVCTAPHCGHRWT.

Belongs to the archaeal RpoM/eukaryotic RPA12/RPB9/RPC11 RNA polymerase family. As to quaternary structure, component of the RNA polymerase II (Pol II) core complex consisting of 12 subunits: a ten-subunit catalytic core composed of POLR2A/RPB1, POLR2B/RPB2, POLR2C/RPB3, POLR2I/RPB9, POLR2J/RPB11, POLR2E/RPABC1, POLR2F/RPABC2, POLR2H/RPABC3, POLR2K/RPABC4 and POLR2L/RPABC5 and a mobile stalk composed of two subunits POLR2D/RPB4 and POLR2G/RPB7, protruding from the core and functioning primarily in transcription initiation. Part of Pol II(G) complex, in which Pol II core associates with an additional subunit POLR2M; unlike conventional Pol II, Pol II(G) functions as a transcriptional repressor. Part of TBP-based Pol II pre-initiation complex (PIC), in which Pol II core assembles with general transcription factors and other specific initiation factors including GTF2E1, GTF2E2, GTF2F1, GTF2F2, TCEA1, ERCC2, ERCC3, GTF2H2, GTF2H3, GTF2H4, GTF2H5, GTF2A1, GTF2A2, GTF2B and TBP; this large multi-subunit PIC complex mediates DNA unwinding and targets Pol II core to the transcription start site where the first phosphodiester bond forms.

The protein localises to the nucleus. It localises to the nucleolus. Its function is as follows. DNA-dependent RNA polymerase catalyzes the transcription of DNA into RNA using the four ribonucleoside triphosphates as substrates. Component of RNA polymerase II which synthesizes mRNA precursors and many functional non-coding RNAs. Pol II is the central component of the basal RNA polymerase II transcription machinery. It is composed of mobile elements that move relative to each other. POLR2I/RPB9 is part of the upper jaw surrounding the central large cleft and thought to grab the incoming DNA template. The chain is DNA-directed RNA polymerase II subunit RPB9 (POLR2I) from Bos taurus (Bovine).